The following is a 368-amino-acid chain: MANSTGLNASEVAGSLGLILAAVVEVGALLGNGALLVVVLRTPGLRDALYLAHLCVVDLLAAASIMPLGLLAAPPPGLGRVRLGPAPCRAARFLSAALLPACTLGVAALGLARYRLIVHPLRPGSRPPPVLVLTAVWAAAGLLGALSLLGTPPAPPPAPARCSVLAGGLGPFRPLWALLAFALPALLLLGAYGGIFVVARRAALRPPRPARGSRLHSDSLDSRLSILPPLRPRLPGGKAALAPALAVGQFAACWLPYGCACLAPAARAAEAEAAVTWVAYSAFAAHPFLYGLLQRPVRLALGRLSRRALPGPVRACTPQAWHPRALLQCLQRPPEGPAVGPSEAPEQTPELAGGRSPAYQGPPESSLS.

The Extracellular portion of the chain corresponds to 1–18 (MANSTGLNASEVAGSLGL). Residues asparagine 3 and asparagine 8 are each glycosylated (N-linked (GlcNAc...) asparagine). The helical transmembrane segment at 19–39 (ILAAVVEVGALLGNGALLVVV) threads the bilayer. The Cytoplasmic portion of the chain corresponds to 40-53 (LRTPGLRDALYLAH). Residues 54 to 74 (LCVVDLLAAASIMPLGLLAAP) traverse the membrane as a helical segment. Residues 75–91 (PPGLGRVRLGPAPCRAA) lie on the Extracellular side of the membrane. The chain crosses the membrane as a helical span at residues 92–112 (RFLSAALLPACTLGVAALGLA). Residues 113 to 129 (RYRLIVHPLRPGSRPPP) are Cytoplasmic-facing. A helical transmembrane segment spans residues 130–150 (VLVLTAVWAAAGLLGALSLLG). The Extracellular segment spans residues 151 to 177 (TPPAPPPAPARCSVLAGGLGPFRPLWA). Residues 178–198 (LLAFALPALLLLGAYGGIFVV) form a helical membrane-spanning segment. At 199-239 (ARRAALRPPRPARGSRLHSDSLDSRLSILPPLRPRLPGGKA) the chain is on the cytoplasmic side. Residues 240 to 260 (ALAPALAVGQFAACWLPYGCA) traverse the membrane as a helical segment. The Extracellular segment spans residues 261-272 (CLAPAARAAEAE). The helical transmembrane segment at 273–293 (AAVTWVAYSAFAAHPFLYGLL) threads the bilayer. Topologically, residues 294-368 (QRPVRLALGR…YQGPPESSLS (75 aa)) are cytoplasmic. Residues 332–368 (RPPEGPAVGPSEAPEQTPELAGGRSPAYQGPPESSLS) are disordered.

The protein belongs to the G-protein coupled receptor 1 family. Homodimers. Forms heterodimer with MTNR1B. Interacts with ARRB1 and ARRB2 in a spontaneous and agonist-independent manner; leading to the internalization of GPR62 in the endosomal compartment. As to expression, expressed in brain; detected in the basal forebrain, frontal cortex, caudate, putamen, thalamus and hippocampus.

Its subcellular location is the cell membrane. The protein localises to the endosome membrane. Its function is as follows. Orphan G-protein coupled receptor. Constitutively activates the G(q/11)/inositol phosphate and the G(s)-alpha/cAMP signaling pathways. Has spontaneous activity for beta-arrestin recruitment. Shows a reciprocal modulation of signaling functions with the melatonin receptor MTNR1B most likely through receptor heteromerization. The protein is G-protein coupled receptor 62 (GPR62) of Homo sapiens (Human).